A 281-amino-acid chain; its full sequence is uncharacterized protein (281 aa).

The stretch at 242–281 (IDKQSRKKNIIREINDIKSKINDLSNYMDNLISELDDLFD) forms a coiled coil.

This is an uncharacterized protein from Acanthamoeba polyphaga (Amoeba).